The following is a 615-amino-acid chain: uncharacterized protein (615 aa).

At Ser48 the chain carries Phosphoserine. Positions 424 to 433 are enriched in acidic residues; the sequence is DRENELEEGS. Positions 424-615 are disordered; sequence DRENELEEGS…YARKKTKKNV (192 aa). Composition is skewed to basic and acidic residues over residues 439–476, 484–496, 504–521, and 529–561; these read DNEREVREKETEIDKEVAQGDNEREVGEKETEIDKEVG, DGNKDMELNKEVA, ESEKDKEVTESEKDKEVA, and ESEKDIEVADSEKDKEVPQDDEMDGGKVTEPSK. Composition is skewed to basic residues over residues 579–589 and 606–615; these read KKPKVVKKVAK and YARKKTKKNV.

This is an uncharacterized protein from Arabidopsis thaliana (Mouse-ear cress).